The sequence spans 452 residues: Exodeoxyribonuclease 7 large subunit (452 aa).

This sequence belongs to the XseA family. Heterooligomer composed of large and small subunits.

Its subcellular location is the cytoplasm. The enzyme catalyses Exonucleolytic cleavage in either 5'- to 3'- or 3'- to 5'-direction to yield nucleoside 5'-phosphates.. In terms of biological role, bidirectionally degrades single-stranded DNA into large acid-insoluble oligonucleotides, which are then degraded further into small acid-soluble oligonucleotides. The chain is Exodeoxyribonuclease 7 large subunit from Bacillus cereus (strain G9842).